A 285-amino-acid chain; its full sequence is Glutamate racemase (285 aa).

Residues Asp-30–Ser-31 and Tyr-62–Gly-63 each bind substrate. The active-site Proton donor/acceptor is the Cys-94. Asn-95–Thr-96 is a substrate binding site. The Proton donor/acceptor role is filled by Cys-206. Thr-207–His-208 provides a ligand contact to substrate.

This sequence belongs to the aspartate/glutamate racemases family.

It carries out the reaction L-glutamate = D-glutamate. Its pathway is cell wall biogenesis; peptidoglycan biosynthesis. Its function is as follows. Provides the (R)-glutamate required for cell wall biosynthesis. This Pectobacterium atrosepticum (strain SCRI 1043 / ATCC BAA-672) (Erwinia carotovora subsp. atroseptica) protein is Glutamate racemase.